The following is a 71-amino-acid chain: Protein SlyX homolog (71 aa).

The disordered stretch occupies residues 52-71; that stretch reads RLDQAESSAGAPANERPPHY.

This sequence belongs to the SlyX family.

This is Protein SlyX homolog from Rhodopseudomonas palustris (strain ATCC BAA-98 / CGA009).